Here is a 199-residue protein sequence, read N- to C-terminus: Thymidine kinase (199 aa).

ATP-binding positions include 15-22 and 88-91; these read GSMFSGKS and DEVQ. Catalysis depends on Glu89, which acts as the Proton acceptor. Zn(2+)-binding residues include Cys145, Cys148, Cys183, and His186.

Belongs to the thymidine kinase family. Homotetramer.

Its subcellular location is the cytoplasm. It carries out the reaction thymidine + ATP = dTMP + ADP + H(+). The protein is Thymidine kinase of Staphylococcus aureus (strain USA300).